The primary structure comprises 506 residues: Cytochrome P450 4B1 (506 aa).

Glu-310 contributes to the heme binding site. Ser-431 carries the post-translational modification Phosphoserine. Position 448 (Cys-448) interacts with heme.

Belongs to the cytochrome P450 family. Heme is required as a cofactor.

It localises to the endoplasmic reticulum membrane. The protein resides in the microsome membrane. The catalysed reaction is an organic molecule + reduced [NADPH--hemoprotein reductase] + O2 = an alcohol + oxidized [NADPH--hemoprotein reductase] + H2O + H(+). Functionally, cytochromes P450 are a group of heme-thiolate monooxygenases. In liver microsomes, this enzyme is involved in an NADPH-dependent electron transport pathway. It oxidizes a variety of structurally unrelated compounds, including steroids, fatty acids, and xenobiotics. This is Cytochrome P450 4B1 (CYP4B1) from Oryctolagus cuniculus (Rabbit).